A 215-amino-acid polypeptide reads, in one-letter code: Pyrrolidone-carboxylate peptidase (215 aa).

Catalysis depends on residues E80, C143, and H167.

The protein belongs to the peptidase C15 family. In terms of assembly, homotetramer.

It is found in the cytoplasm. It catalyses the reaction Release of an N-terminal pyroglutamyl group from a polypeptide, the second amino acid generally not being Pro.. Removes 5-oxoproline from various penultimate amino acid residues except L-proline. The chain is Pyrrolidone-carboxylate peptidase from Bacillus cereus (strain 03BB102).